Reading from the N-terminus, the 1022-residue chain is Collagen alpha-1(I) chain (1022 aa).

The segment at 1–1022 is disordered; the sequence is SAGGISVPGP…PGPPGPPGPP (1022 aa). Residues Pro20, Pro23, Pro26, Pro35, Pro38, Pro41, Pro56, Pro71, Pro77, Pro86, and Pro92 each carry the 4-hydroxyproline modification. A compositionally biased stretch (low complexity) spans 28–47; it reads PQGFQGPPGEPGEPGASGPM. Residues 59–73 show a composition bias toward basic and acidic residues; that stretch reads NGDDGEAGKPGRPGE. A 5-hydroxylysine; alternate modification is found at Lys95. A glycan (O-linked (Gal...) hydroxylysine; alternate) is linked at Lys95. Ser101 carries the post-translational modification Phosphoserine. Over residues 109 to 125 the composition is skewed to low complexity; sequence DAGPAGPKGEPGSPGEN. 4-hydroxyproline occurs at positions 119, 122, 128, 137, 143, 164, 173, 176, 203, 206, 218, 224, 233, 239, 242, and 257. The span at 143–161 shows a compositional bias: low complexity; the sequence is PGASGPAGARGNDGAAGAA. Residues 163-175 are compositionally biased toward pro residues; the sequence is PPGPTGPAGPPGF. Low complexity predominate over residues 209 to 259; it reads AGAAGPAGNPGADGQPGAKGANGAPGIAGAPGFPGARGPSGPQGPSGAPGP. Lys260 bears the 5-hydroxylysine mark. 4-hydroxyproline is present on residues Pro266, Pro269, Pro281, Pro290, Pro305, Pro311, Pro320, and Pro326. A compositionally biased stretch (gly residues) spans 315 to 324; it reads GERGGPGSRG. Residue Lys335 is modified to 5-hydroxylysine. Pro344, Pro353, Pro359, Pro365, Pro374, Pro377, Pro386, Pro395, Pro401, Pro413, Pro422, Pro431, Pro434, Pro452, Pro470, Pro476, Pro482, Pro488, Pro494, Pro500, Pro512, Pro521, Pro533, Pro545, Pro548, Pro554, Pro560, and Pro569 each carry 4-hydroxyproline. Over residues 368-394 the composition is skewed to low complexity; that stretch reads KGLTGSPGSPGPDGKTGPPGPAGQDGR. Low complexity predominate over residues 403–422; the sequence is ARGQAGVMGFPGPKGAAGEP. Over residues 464–491 the composition is skewed to low complexity; it reads QGPAGSPGFQGLPGPAGPPGEAGKPGEQ. Residues 530–557 are compositionally biased toward low complexity; the sequence is NGAPGNDGAKGDAGAPGAPGSQGAPGLQ. Lys581 is subject to 5-hydroxylysine. 4-hydroxyproline is present on residues Pro587, Pro602, and Pro608. Positions 614-628 are enriched in low complexity; that stretch reads SGPSGPAGPTGARGA. Residue Ser617 is modified to Phosphoserine. 4-hydroxyproline occurs at positions 629, 635, 638, 647, 653, 671, 680, and 689. A compositionally biased stretch (low complexity) spans 641–668; sequence AGFAGPPGADGQPGAKGEPGDAGAKGDA. Residues 670–682 are compositionally biased toward pro residues; that stretch reads PPGPAGPTGPPGP. 5-hydroxylysine is present on Lys692. Over residues 697–713 the composition is skewed to low complexity; that stretch reads SAGPPGATGFPGAAGRV. Pro701 and Pro707 each carry 4-hydroxyproline. Pro715 carries the 3-hydroxyproline modification. 4-hydroxyproline is present on residues Pro716, Pro725, Pro728, Pro749, Pro758, Pro767, Pro776, Pro794, Pro803, Pro806, Pro812, Pro827, Pro833, Pro839, Pro848, and Pro854. A compositionally biased stretch (low complexity) spans 742–751; the sequence is ETGPAGRPGE. Residues 761-776 show a composition bias toward low complexity; the sequence is TGEKGSPGADGPAGAP. Residues 826–836 show a composition bias toward pro residues; that stretch reads PPGPVGPPGLA. The span at 838-853 shows a compositional bias: low complexity; the sequence is PPGESGREGSPGAEGS. Lys863 bears the 5-hydroxylysine mark. The segment covering 872 to 887 has biased composition (pro residues); it reads AGPPGAPGAPGAPGPV. 3 positions are modified to 4-hydroxyproline: Pro875, Pro878, and Pro881. The segment covering 908 to 922 has biased composition (low complexity); sequence AGPAGARGPAGPQGP. Residues 923–937 are compositionally biased toward basic and acidic residues; sequence RGDKGETGEQGDRGI. Residue Lys926 is modified to 5-hydroxylysine. Lys938 carries the post-translational modification 5-hydroxylysine; alternate. Residue Lys938 is glycosylated (O-linked (Gal...) hydroxylysine; alternate). 4-hydroxyproline occurs at positions 953, 956, 974, and 989. Positions 956-989 are enriched in low complexity; that stretch reads PGEQGPSGASGPAGPRGPPGSAGSPGKDGLNGLP. Pro994 is subject to 3-hydroxyproline. Pro995 carries the 4-hydroxyproline modification. Residues 1007 to 1022 show a composition bias toward pro residues; that stretch reads VGPPGPPGPPGPPGPP. Pro1009 carries the post-translational modification 3-hydroxyproline. Pro1010 is modified (4-hydroxyproline). Residue Pro1012 is modified to 3-hydroxyproline. At Pro1013 the chain carries 4-hydroxyproline. 3-hydroxyproline is present on Pro1015. 4-hydroxyproline occurs at positions 1016, 1019, and 1022.

It belongs to the fibrillar collagen family. In terms of assembly, trimers of one alpha 2(I) and two alpha 1(I) chains. In terms of processing, prolines at the third position of the tripeptide repeating unit (G-X-Y) are hydroxylated in some or all of the chains. As to expression, expressed in bone.

It is found in the secreted. It localises to the extracellular space. The protein resides in the extracellular matrix. Functionally, type I collagen is a member of group I collagen (fibrillar forming collagen). The polypeptide is Collagen alpha-1(I) chain (Mylodon darwinii (Giant ground sloth)).